The sequence spans 138 residues: Phosphoribosyl-AMP cyclohydrolase (138 aa).

A Mg(2+)-binding site is contributed by Asp84. Residue Cys85 coordinates Zn(2+). Mg(2+) contacts are provided by Asp86 and Asp88. The Zn(2+) site is built by Cys102 and Cys109.

The protein belongs to the PRA-CH family. In terms of assembly, homodimer. Requires Mg(2+) as cofactor. It depends on Zn(2+) as a cofactor.

Its subcellular location is the cytoplasm. The catalysed reaction is 1-(5-phospho-beta-D-ribosyl)-5'-AMP + H2O = 1-(5-phospho-beta-D-ribosyl)-5-[(5-phospho-beta-D-ribosylamino)methylideneamino]imidazole-4-carboxamide. The protein operates within amino-acid biosynthesis; L-histidine biosynthesis; L-histidine from 5-phospho-alpha-D-ribose 1-diphosphate: step 3/9. Functionally, catalyzes the hydrolysis of the adenine ring of phosphoribosyl-AMP. In Burkholderia lata (strain ATCC 17760 / DSM 23089 / LMG 22485 / NCIMB 9086 / R18194 / 383), this protein is Phosphoribosyl-AMP cyclohydrolase.